The chain runs to 264 residues: Virulence plasmid ParA family protein pGP5-D (264 aa).

9–16 contacts ATP; that stretch reads FKGGTGKT.

It belongs to the ParA family.

Its function is as follows. Required for growth within mammalian cells. The protein is Virulence plasmid ParA family protein pGP5-D of Chlamydia trachomatis.